Consider the following 159-residue polypeptide: Small heat shock protein hspM (159 aa).

One can recognise a sHSP domain in the interval 1 to 159 (MFVLNFELAG…LSNNIKIQIN (159 aa)). Residues 35 to 101 (MNNNNKNNLQ…NNNNKSSKTN (67 aa)) are disordered. 2 stretches are compositionally biased toward low complexity: residues 36 to 46 (NNNNKNNLQIN) and 61 to 95 (SSSSNNNNNNNNNNNNNNNNNNNNNNNNNSNNNNN).

This sequence belongs to the small heat shock protein (HSP20) family.

The polypeptide is Small heat shock protein hspM (hspM) (Dictyostelium discoideum (Social amoeba)).